Consider the following 317-residue polypeptide: Melanocyte-stimulating hormone receptor (317 aa).

The Extracellular segment spans residues 1–37; that stretch reads MPVQGSQRRLLGSLNSTPTATPHLGLAANQTGARCLE. Asn-29 carries N-linked (GlcNAc...) asparagine glycosylation. A helical membrane pass occupies residues 38 to 63; the sequence is VSIPDGLFLSLGLVSLVENVLVVTAI. The Cytoplasmic segment spans residues 64–72; it reads AKNRNLHSP. Residues 73–93 form a helical membrane-spanning segment; the sequence is MYCFICCLALSDLLVSGSNML. Topologically, residues 94-118 are extracellular; it reads ETAVTLLLEAGALAARAAVVQQLDN. A helical transmembrane segment spans residues 119-140; it reads VIDVITCSSMLSSLCFLGAIAV. The Cytoplasmic portion of the chain corresponds to 141–163; sequence DRYISIFYALRYHSIVTLPRARR. The chain crosses the membrane as a helical span at residues 164-183; that stretch reads AVAAIWVASVLFSMLFIAYY. Over 184–191 the chain is Extracellular; it reads DHAAVLLC. Residues 192 to 211 form a helical membrane-spanning segment; that stretch reads LVVFFLAMLVLMAVLYVHML. Residues 212 to 240 lie on the Cytoplasmic side of the membrane; it reads ARACQHAQGIARLHKRQRPAHQGFGLKGA. Residues 241–266 form a helical membrane-spanning segment; sequence ATLTILLGIFFLCWGPFFLHLTLIVL. Residues 267–279 are Extracellular-facing; the sequence is CPQHPTCSCIFKN. Residues 280-300 form a helical membrane-spanning segment; it reads FNLFLALIICNAIIDPLIYAF. At 301–317 the chain is on the cytoplasmic side; it reads RSQELRRTLKEVLLCSW. Cys-315 carries S-palmitoyl cysteine lipidation.

This sequence belongs to the G-protein coupled receptor 1 family. In terms of assembly, interacts with MGRN1, but does not undergo MGRN1-mediated ubiquitination; this interaction competes with GNAS-binding and thus inhibits agonist-induced cAMP production. Interacts with OPN3; the interaction results in a decrease in MC1R-mediated cAMP signaling and ultimately a decrease in melanin production in melanocytes.

The protein localises to the cell membrane. Receptor for MSH (alpha, beta and gamma) and ACTH. The activity of this receptor is mediated by G proteins which activate adenylate cyclase. Mediates melanogenesis, the production of eumelanin (black/brown) and phaeomelanin (red/yellow), via regulation of cAMP signaling in melanocytes. The chain is Melanocyte-stimulating hormone receptor (MC1R) from Miopithecus talapoin (Angolan talapoin).